A 356-amino-acid chain; its full sequence is Butyrate kinase (356 aa).

Belongs to the acetokinase family.

The protein resides in the cytoplasm. It carries out the reaction butanoate + ATP = butanoyl phosphate + ADP. It participates in lipid metabolism; butanoate metabolism. Catalyzes the conversion of butyryl-CoA through butyryl phosphate to butyrate. The sequence is that of Butyrate kinase from Clostridium tetani (strain Massachusetts / E88).